The chain runs to 912 residues: MSNPSRPKKRVYPTAQYVAPSSPSMPFQGGAFSGQTMQSQVSGSASPYMAPSGQFTQPMNASDAQNQPQFMTPAQQQLKQQISQATTSMNDMHLHNVPVIDPNAYYQPNNGNNIQPTGENKPSLTPGRPTNNLYPVDILTELPPKINDLNLLPPPILLEPEISTKFSESVYASPDYIRSTLNAVPQSNALLKKSKLPFALIIKPFKHLHDMNAPLPCNEDEFVIRCRRCRGYLNPFVKILQVESKWRCNFCGCINGFPDGSEHFQLPNLYNRNELTYSSMDFLPSSSYSQQVKEEPPAVYTFVIDVSINTIKNGYLFSVANALVNSLDLIPNHDNKTLISLICADSSLHYFSVPLDTEDGPKESSMFDISDLDEPFLPTSNSLLVSLSQCRNNLEHLLLKIPEIFKSTTIQSFALGPALQNASELVKDKGGKVIVCSSTLPNMGIGKLNPRDERGISNTSKESKDLLSCQDAFYRSFTVECNKLQITIDLFIASGNYMDIATLSNLSKYTGGQTHFYPQFLGSVAADFTKFSKEFSRHLSMDLSFRTVMRPRCSIGLRIEDSYGHLFNRSTDLCSFPAMPRDQSYVVELSIEDKLTADYCYAQIAFLYSTGTGKRKIRVLTLALPTTTILHNVFASADQLAIATYFARIATEKVMKNSFDHARSFLNTSLEEILINYRKEIVVENNAGGVTLRFSTNLKMLPLLVHMLLKNIAFRKGVIPSDLRAIALNNMESLPLKYLIKNAYPTVYSLHDIPDEAGLPDENGVIVMPPPMNDTISSFEKYGLYLINTPNELILWVGGNAIPELVSDVFGLQDVFQVPNGKNELPELPESEFNQRLRSIIENIRANDDEQITYQTLYIVRGNSQNEPANSSQNKEIVPLRNWAVSFLVEDNVVGCESYREFLQNLKTRLNK.

A compositionally biased stretch (basic residues) spans 1–11 (MSNPSRPKKRV). 2 disordered regions span residues 1–83 (MSNP…QQIS) and 102–129 (PNAY…PGRP). 3 stretches are compositionally biased toward polar residues: residues 33 to 45 (SGQT…SGSA), 53 to 74 (GQFT…MTPA), and 106 to 129 (YQPN…PGRP). Residues Cys226, Cys229, Cys248, and Cys251 each coordinate Zn(2+). The segment at 226-251 (CRRCRGYLNPFVKILQVESKWRCNFC) is zinc finger-like.

This sequence belongs to the SEC23/SEC24 family. SEC24 subfamily. As to quaternary structure, the COPII coat is composed of at least 5 proteins: the SEC23/24 complex, the SEC13/31 complex, and the protein SAR1. Golgi apparatus membrane; Peripheral membrane protein; Cytoplasmic side.

It is found in the cytoplasm. The protein localises to the cytoplasmic vesicle. The protein resides in the COPII-coated vesicle membrane. Its subcellular location is the endoplasmic reticulum membrane. It localises to the golgi apparatus membrane. Component of the coat protein complex II (COPII) which promotes the formation of transport vesicles from the endoplasmic reticulum (ER). The coat has two main functions, the physical deformation of the endoplasmic reticulum membrane into vesicles and the selection of cargo molecules. The polypeptide is Protein transport protein SEC24-2 (SEC242) (Naumovozyma castellii (Yeast)).